The following is a 272-amino-acid chain: HMP-PP phosphatase (272 aa).

Aspartate 8 serves as the catalytic Nucleophile. Mg(2+)-binding residues include aspartate 8, aspartate 10, and aspartate 212.

Belongs to the HAD-like hydrolase superfamily. Cof family. The cofactor is Mg(2+).

The catalysed reaction is 4-amino-2-methyl-5-(diphosphooxymethyl)pyrimidine + H2O = 4-amino-2-methyl-5-(phosphooxymethyl)pyrimidine + phosphate + H(+). Its function is as follows. Catalyzes the hydrolysis of 4-amino-2-methyl-5-hydroxymethylpyrimidine pyrophosphate (HMP-PP) to 4-amino-2-methyl-5-hydroxymethylpyrimidine phosphate (HMP-P). The chain is HMP-PP phosphatase from Cronobacter sakazakii (strain ATCC BAA-894) (Enterobacter sakazakii).